The following is a 126-amino-acid chain: Glycine cleavage system H protein (126 aa).

The Lipoyl-binding domain occupies 22 to 104 (IATVGITAFA…YGRGWLFKVE (83 aa)). Lys-63 carries the N6-lipoyllysine modification.

The protein belongs to the GcvH family. In terms of assembly, the glycine cleavage system is composed of four proteins: P, T, L and H. It depends on (R)-lipoate as a cofactor.

Its function is as follows. The glycine cleavage system catalyzes the degradation of glycine. The H protein shuttles the methylamine group of glycine from the P protein to the T protein. The protein is Glycine cleavage system H protein of Thermobifida fusca (strain YX).